The primary structure comprises 606 residues: RUN and FYVE domain-containing protein 2 (606 aa).

One can recognise an RUN domain in the interval aspartate 37 to glutamate 169. The stretch at glutamate 210–glycine 534 forms a coiled coil. The FYVE-type zinc-finger motif lies at aspartate 540–isoleucine 598. 8 residues coordinate Zn(2+): cysteine 546, cysteine 549, cysteine 562, cysteine 565, cysteine 570, cysteine 573, cysteine 590, and cysteine 593.

Interacts with BMX.

The protein resides in the nucleus. This is RUN and FYVE domain-containing protein 2 (RUFY2) from Pongo abelii (Sumatran orangutan).